Here is a 360-residue protein sequence, read N- to C-terminus: Photosystem II protein D1 2 (360 aa).

Transmembrane regions (helical) follow at residues 29–46 (YIGWFGVLMIPTLLAATT), 118–133 (HFLTGVFCYLGREWEL), and 142–156 (WICLAFSAPVAAATA). Residue H118 participates in chlorophyll a binding. Y126 contributes to the pheophytin a binding site. Residues D170 and E189 each coordinate [CaMn4O5] cluster. Residues 197 to 218 (FHMLGVAGVFGGSLFSAMHGSL) traverse the membrane as a helical segment. Chlorophyll a is bound at residue H198. A quinone contacts are provided by residues H215 and 264–265 (SF). Fe cation is bound at residue H215. A Fe cation-binding site is contributed by H272. Residues 274 to 288 (FLAAWPVIGIWFTAL) form a helical membrane-spanning segment. [CaMn4O5] cluster-binding residues include H332, E333, D342, and A344. The propeptide occupies 345 to 360 (AGEVAPVAISAPAING).

Belongs to the reaction center PufL/M/PsbA/D family. In terms of assembly, PSII is composed of 1 copy each of membrane proteins PsbA, PsbB, PsbC, PsbD, PsbE, PsbF, PsbH, PsbI, PsbJ, PsbK, PsbL, PsbM, PsbT, PsbX, PsbY, PsbZ, Psb30/Ycf12, peripheral proteins PsbO, CyanoQ (PsbQ), PsbU, PsbV and a large number of cofactors. It forms dimeric complexes. It depends on The D1/D2 heterodimer binds P680, chlorophylls that are the primary electron donor of PSII, and subsequent electron acceptors. It shares a non-heme iron and each subunit binds pheophytin, quinone, additional chlorophylls, carotenoids and lipids. D1 provides most of the ligands for the Mn4-Ca-O5 cluster of the oxygen-evolving complex (OEC). There is also a Cl(-1) ion associated with D1 and D2, which is required for oxygen evolution. The PSII complex binds additional chlorophylls, carotenoids and specific lipids. as a cofactor. In terms of processing, tyr-161 forms a radical intermediate that is referred to as redox-active TyrZ, YZ or Y-Z. C-terminally processed by CtpA; processing is essential to allow assembly of the oxygen-evolving complex and thus photosynthetic growth.

Its subcellular location is the cellular thylakoid membrane. The enzyme catalyses 2 a plastoquinone + 4 hnu + 2 H2O = 2 a plastoquinol + O2. Photosystem II (PSII) is a light-driven water:plastoquinone oxidoreductase that uses light energy to abstract electrons from H(2)O, generating O(2) and a proton gradient subsequently used for ATP formation. It consists of a core antenna complex that captures photons, and an electron transfer chain that converts photonic excitation into a charge separation. The D1/D2 (PsbA/PsbD) reaction center heterodimer binds P680, the primary electron donor of PSII as well as several subsequent electron acceptors. This is Photosystem II protein D1 2 from Nostoc sp. (strain PCC 7120 / SAG 25.82 / UTEX 2576).